Here is a 500-residue protein sequence, read N- to C-terminus: Cytochrome P450 monooxygenase ausR (500 aa).

A helical transmembrane segment spans residues 15-35 (GVGLYILWTVAVLFVIFKLLA). Position 439 (Cys439) interacts with heme.

This sequence belongs to the cytochrome P450 family. The cofactor is heme.

The protein resides in the membrane. Its pathway is secondary metabolite biosynthesis; terpenoid biosynthesis. Cytochrome P450 monooxygenase; part of the gene cluster that mediates the biosynthesis of calidodehydroaustin, a fungal meroterpenoid. The first step of the pathway is the synthesis of 3,5-dimethylorsellinic acid by the polyketide synthase ausA. 3,5-dimethylorsellinic acid is then prenylated by the polyprenyl transferase ausN. Further epoxidation by the FAD-dependent monooxygenase ausM and cyclization by the probable terpene cyclase ausL lead to the formation of protoaustinoid A. Protoaustinoid A is then oxidized to spiro-lactone preaustinoid A3 by the combined action of the FAD-binding monooxygenases ausB and ausC, and the dioxygenase ausE. Acid-catalyzed keto-rearrangement and ring contraction of the tetraketide portion of preaustinoid A3 by ausJ lead to the formation of preaustinoid A4. The aldo-keto reductase ausK, with the help of ausH, is involved in the next step by transforming preaustinoid A4 into isoaustinone which is in turn hydroxylated by the P450 monooxygenase ausI to form austinolide. The cytochrome P450 monooxygenase ausG modifies austinolide to austinol. Austinol is further acetylated to austin by the O-acetyltransferase ausP, which spontaneously changes to dehydroaustin. The cytochrome P450 monooxygenase ausR then converts dehydroaustin is into 7-dehydrodehydroaustin. The hydroxylation catalyzed by ausR permits the O-acetyltransferase ausQ to add an additional acetyl group to the molecule, leading to the formation of acetoxydehydroaustin. The short chain dehydrogenase ausT catalyzes the reduction of the double bond present between carbon atoms 1 and 2 to convert 7-dehydrodehydroaustin into 1,2-dihydro-7-hydroxydehydroaustin. AusQ catalyzes not only an acetylation reaction but also the addition of the PKS ausV diketide product to 1,2-dihydro-7-hydroxydehydroaustin, forming precalidodehydroaustin. Finally, the iron/alpha-ketoglutarate-dependent dioxygenase converts precalidodehydroaustin into calidodehydroaustin. The polypeptide is Cytochrome P450 monooxygenase ausR (Aspergillus calidoustus).